Consider the following 290-residue polypeptide: Arylamine N-acetyltransferase 1 (290 aa).

At Met-1 the chain carries N-acetylmethionine. Cys-68 serves as the catalytic Acyl-thioester intermediate. CoA contacts are provided by Thr-103 and Gly-104. 106–107 (IH) contacts substrate. Residues His-107 and Asp-122 contribute to the active site. CoA contacts are provided by Tyr-208 and Ser-214.

It belongs to the arylamine N-acetyltransferase family.

Its subcellular location is the cytoplasm. The enzyme catalyses an arylamine + acetyl-CoA = an N-acetylarylamine + CoA. In Oryctolagus cuniculus (Rabbit), this protein is Arylamine N-acetyltransferase 1 (NAT1).